The sequence spans 130 residues: UPF0102 protein SCO5602 (130 aa).

The protein belongs to the UPF0102 family.

The polypeptide is UPF0102 protein SCO5602 (Streptomyces coelicolor (strain ATCC BAA-471 / A3(2) / M145)).